Reading from the N-terminus, the 488-residue chain is 6-phosphogluconate dehydrogenase, decarboxylating (488 aa).

NADP(+) contacts are provided by residues 9-14 (GLAVMG), 32-34 (NRT), 74-76 (VKA), and N102. Residues N102 and 128–130 (SGG) each bind substrate. Residue K183 is the Proton acceptor of the active site. Position 186–187 (186–187 (HN)) interacts with substrate. Catalysis depends on E190, which acts as the Proton donor. Y191, K260, R287, R451, and H457 together coordinate substrate.

It belongs to the 6-phosphogluconate dehydrogenase family. In terms of assembly, homodimer.

It carries out the reaction 6-phospho-D-gluconate + NADP(+) = D-ribulose 5-phosphate + CO2 + NADPH. It participates in carbohydrate degradation; pentose phosphate pathway; D-ribulose 5-phosphate from D-glucose 6-phosphate (oxidative stage): step 3/3. Functionally, catalyzes the oxidative decarboxylation of 6-phosphogluconate to ribulose 5-phosphate and CO(2), with concomitant reduction of NADP to NADPH. The chain is 6-phosphogluconate dehydrogenase, decarboxylating (gnd) from Treponema pallidum (strain Nichols).